The following is a 187-amino-acid chain: Photosystem I assembly protein Ycf4 (187 aa).

Transmembrane regions (helical) follow at residues Tyr-25–Leu-47 and Phe-62–Trp-84.

It belongs to the Ycf4 family.

Its subcellular location is the plastid. The protein localises to the chloroplast thylakoid membrane. Seems to be required for the assembly of the photosystem I complex. The protein is Photosystem I assembly protein Ycf4 of Mesostigma viride (Green alga).